The following is a 998-amino-acid chain: tRNA (34-2'-O)-methyltransferase regulator WDR6 (998 aa).

WD repeat units follow at residues Leu148–Pro185, Ala200–Thr239, Gly250–Arg291, Gln294–Lys333, Asn476–Gln515, Met527–Arg566, Val567–Leu608, Arg664–Arg704, Ala779–Leu821, Asp826–Gln865, and Leu868–Lys911.

This sequence belongs to the WD repeat WDR6 family. Interacts with Trm7-34.

The protein resides in the cytoplasm. In terms of biological role, together with methyltransferase Trm7-34, methylates the 2'-O-ribose of nucleotides at position 34 of the anticodon loop of substrate tRNAs. This Drosophila melanogaster (Fruit fly) protein is tRNA (34-2'-O)-methyltransferase regulator WDR6.